The primary structure comprises 275 residues: DNA repair protein RecO (275 aa).

The tract at residues M1 to S38 is disordered. The segment covering D8–D24 has biased composition (low complexity).

Belongs to the RecO family.

Functionally, involved in DNA repair and RecF pathway recombination. The polypeptide is DNA repair protein RecO (Burkholderia pseudomallei (strain 1710b)).